The sequence spans 352 residues: Transcription factor MYB86 (352 aa).

HTH myb-type domains follow at residues Lys-9–Leu-61 and Arg-62–Leu-116. 2 consecutive DNA-binding regions (H-T-H motif) follow at residues Trp-37–Leu-61 and Trp-89–Leu-112.

As to expression, expressed in stems, flowers and seeds. Weakly expressed in leaves and roots.

The protein resides in the nucleus. Probable transcription factor. This chain is Transcription factor MYB86 (MYB86), found in Arabidopsis thaliana (Mouse-ear cress).